The chain runs to 71 residues: Peptide Ctri9819 (71 aa).

A signal peptide spans Met-1–Thr-23. Leu-34 is subject to Leucine amide. Positions Ser-38–Ser-71 are excised as a propeptide.

This sequence belongs to the non-disulfide-bridged peptide (NDBP) superfamily. Short antimicrobial peptide (group 4) family. Expressed by the venom gland.

It localises to the secreted. Antimicrobial peptide. The protein is Peptide Ctri9819 of Chaerilus tricostatus (Scorpion).